The primary structure comprises 164 residues: Phosphopantetheine adenylyltransferase (164 aa).

Serine 9 lines the substrate pocket. ATP is bound by residues 9–10 and histidine 17; that span reads SF. Substrate-binding residues include lysine 41, valine 78, and arginine 92. ATP-binding positions include 93-95, glutamate 103, and 128-134; these read GLR and SRPITAT.

This sequence belongs to the bacterial CoaD family. In terms of assembly, homohexamer. It depends on Mg(2+) as a cofactor.

The protein localises to the cytoplasm. The enzyme catalyses (R)-4'-phosphopantetheine + ATP + H(+) = 3'-dephospho-CoA + diphosphate. It participates in cofactor biosynthesis; coenzyme A biosynthesis; CoA from (R)-pantothenate: step 4/5. Its function is as follows. Reversibly transfers an adenylyl group from ATP to 4'-phosphopantetheine, yielding dephospho-CoA (dPCoA) and pyrophosphate. This chain is Phosphopantetheine adenylyltransferase, found in Rhizobium etli (strain ATCC 51251 / DSM 11541 / JCM 21823 / NBRC 15573 / CFN 42).